Reading from the N-terminus, the 264-residue chain is MNQVTESAVQFDVVTLFPEMFRALTDWGITSRAVKQERFGLRTWNPRDFTTDNYRTVDDRPYGGGPGMVMLAKPLEAAINAAKAAQAELGVASTRVVMMSPQGAPFTHERAVRMAQEPGVIVLCGRYEAIDQRLLDRCVDEEISLGDFVLSGGELPAMAMMDAVVRLLPGVLNDAQSAVQDSFVDGLLDCPHYTRPEEYEGMRVPDVLLGGHHAEIERWRRQEALKNTLRKRPDLIVRARREKLLSRADEAWLANLAREAKNAS.

S-adenosyl-L-methionine contacts are provided by residues glycine 125 and 145–150 (LGDFVL).

The protein belongs to the RNA methyltransferase TrmD family. In terms of assembly, homodimer.

Its subcellular location is the cytoplasm. The catalysed reaction is guanosine(37) in tRNA + S-adenosyl-L-methionine = N(1)-methylguanosine(37) in tRNA + S-adenosyl-L-homocysteine + H(+). Its function is as follows. Specifically methylates guanosine-37 in various tRNAs. The sequence is that of tRNA (guanine-N(1)-)-methyltransferase from Burkholderia ambifaria (strain MC40-6).